The primary structure comprises 130 residues: Cyclin-dependent kinase 4 inhibitor B (130 aa).

4 ANK repeats span residues 5–34 (SSDAGLATAAARGQVETVRQLLEAGADPNA), 38–66 (FGRRPIQVMMMGSAQVAELLLLHGAEPNC), 71–100 (TLTRPVHDAAREGFLDTLVVLHRAGARLDV), and 104–130 (WGRLPVDLAEEQGHRDIARYLHAATGD). Thr12 is subject to Phosphothreonine.

Belongs to the CDKN2 cyclin-dependent kinase inhibitor family. As to quaternary structure, heterodimer of CDKN2B with CDK4 or CDK6. In terms of tissue distribution, expressed ubiquitously.

In terms of biological role, interacts strongly with CDK4 and CDK6. Potent inhibitor. Potential effector of TGF-beta induced cell cycle arrest. In Mus musculus (Mouse), this protein is Cyclin-dependent kinase 4 inhibitor B (Cdkn2b).